The chain runs to 122 residues: Large ribosomal subunit protein uL14 (122 aa).

The protein belongs to the universal ribosomal protein uL14 family. In terms of assembly, part of the 50S ribosomal subunit. Forms a cluster with proteins L3 and L19. In the 70S ribosome, L14 and L19 interact and together make contacts with the 16S rRNA in bridges B5 and B8.

Its function is as follows. Binds to 23S rRNA. Forms part of two intersubunit bridges in the 70S ribosome. This is Large ribosomal subunit protein uL14 from Bacillus licheniformis (strain ATCC 14580 / DSM 13 / JCM 2505 / CCUG 7422 / NBRC 12200 / NCIMB 9375 / NCTC 10341 / NRRL NRS-1264 / Gibson 46).